A 394-amino-acid chain; its full sequence is Elongation factor Tu-A (394 aa).

The tr-type G domain occupies lysine 10–glutamine 204. Residues glycine 19–threonine 26 are G1. Glycine 19 to threonine 26 lines the GTP pocket. Residue threonine 26 participates in Mg(2+) binding. The tract at residues glycine 60 to asparagine 64 is G2. A G3 region spans residues aspartate 81 to glycine 84. GTP-binding positions include aspartate 81–histidine 85 and asparagine 136–aspartate 139. Positions asparagine 136–aspartate 139 are G4. Residues serine 174–leucine 176 form a G5 region.

It belongs to the TRAFAC class translation factor GTPase superfamily. Classic translation factor GTPase family. EF-Tu/EF-1A subfamily. Monomer.

The protein localises to the cytoplasm. It catalyses the reaction GTP + H2O = GDP + phosphate + H(+). Functionally, GTP hydrolase that promotes the GTP-dependent binding of aminoacyl-tRNA to the A-site of ribosomes during protein biosynthesis. The sequence is that of Elongation factor Tu-A from Pasteurella multocida (strain Pm70).